Reading from the N-terminus, the 389-residue chain is Na(+)/H(+) antiporter NhaA 1 (389 aa).

The next 11 membrane-spanning stretches (helical) occupy residues 12–32, 62–82, 97–117, 128–148, 157–177, 184–204, 220–240, 260–280, 282–302, 331–351, and 365–385; these read VLNEAFGGVLLIVCTLLALLV, FLLWINDGLISIFFFAIGLEL, IVLPFMAALGGILIPAMLFAL, GWAIPTATDTAFALAILMMCG, IFLLSLAIFDDVGAILIIAIF, IAAFVIAGLAILVMLILNLLG, ISVLKSGVHATLAGIVTAFFI, FWIAFIILPLFAFANAGVNLS, IDIGAIFSGVSIGIFLGLFVG, LYGVCILTGIGFTMSLFIDGL, and LAILIASFCSGIWGFIYLKFF.

This sequence belongs to the NhaA Na(+)/H(+) (TC 2.A.33) antiporter family.

It is found in the cell inner membrane. It carries out the reaction Na(+)(in) + 2 H(+)(out) = Na(+)(out) + 2 H(+)(in). Functionally, na(+)/H(+) antiporter that extrudes sodium in exchange for external protons. The sequence is that of Na(+)/H(+) antiporter NhaA 1 from Campylobacter jejuni subsp. jejuni serotype O:2 (strain ATCC 700819 / NCTC 11168).